Consider the following 442-residue polypeptide: Elongation factor 1-alpha (442 aa).

The tr-type G domain occupies 6 to 229 (KPHMNLIVIG…ALDNLKPPSV (224 aa)). The G1 stretch occupies residues 15–22 (GHVDHGKS). Residue 15–22 (GHVDHGKS) coordinates GTP. Ser22 provides a ligand contact to Mg(2+). Positions 71–75 (GVTID) are G2. A G3 region spans residues 92 to 95 (DAPG). GTP is bound by residues 92 to 96 (DAPGH) and 154 to 157 (NKMD). Residues 154–157 (NKMD) are G4. Residues 195 to 197 (SAW) are G5.

The protein belongs to the TRAFAC class translation factor GTPase superfamily. Classic translation factor GTPase family. EF-Tu/EF-1A subfamily.

Its subcellular location is the cytoplasm. The catalysed reaction is GTP + H2O = GDP + phosphate + H(+). Functionally, GTP hydrolase that promotes the GTP-dependent binding of aminoacyl-tRNA to the A-site of ribosomes during protein biosynthesis. This chain is Elongation factor 1-alpha, found in Ignicoccus hospitalis (strain KIN4/I / DSM 18386 / JCM 14125).